The chain runs to 480 residues: Serine carboxypeptidase-like 35 (480 aa).

Residues 1–20 (MKKNALWLLCILVLPAIACG) form the signal peptide. Residues asparagine 79 and asparagine 146 are each glycosylated (N-linked (GlcNAc...) asparagine). 3 disulfides stabilise this stretch: cysteine 95–cysteine 363, cysteine 257–cysteine 270, and cysteine 294–cysteine 331. The active site involves serine 188. N-linked (GlcNAc...) asparagine glycosylation occurs at asparagine 265. Residue asparagine 352 is glycosylated (N-linked (GlcNAc...) asparagine). Active-site residues include aspartate 399 and histidine 452.

Belongs to the peptidase S10 family. As to expression, expressed in seedlings, flowers and siliques.

It is found in the secreted. Probable carboxypeptidase. This chain is Serine carboxypeptidase-like 35 (SCPL35), found in Arabidopsis thaliana (Mouse-ear cress).